The primary structure comprises 400 residues: Acetate kinase (400 aa).

N10 contacts Mg(2+). K17 lines the ATP pocket. A substrate-binding site is contributed by R91. D150 (proton donor/acceptor) is an active-site residue. ATP is bound by residues 210–214, 285–287, and 333–337; these read HLGSG, DCR, and GIGEN. E387 contacts Mg(2+).

Belongs to the acetokinase family. In terms of assembly, homodimer. Mg(2+) is required as a cofactor. It depends on Mn(2+) as a cofactor.

The protein localises to the cytoplasm. The catalysed reaction is acetate + ATP = acetyl phosphate + ADP. It functions in the pathway metabolic intermediate biosynthesis; acetyl-CoA biosynthesis; acetyl-CoA from acetate: step 1/2. Catalyzes the formation of acetyl phosphate from acetate and ATP. Can also catalyze the reverse reaction. The sequence is that of Acetate kinase from Baumannia cicadellinicola subsp. Homalodisca coagulata.